Here is a 1220-residue protein sequence, read N- to C-terminus: Protein transport protein Sec31A (1220 aa).

WD repeat units follow at residues 4–47 (KEVD…EIFE), 68–111 (RYHK…AGDK), 120–160 (KHTG…TPMT), 166–206 (QPPE…PIIK), 209–254 (DHSN…SPLR), 258–298 (NHAR…VLYE), and 301–342 (TNTQ…DGLR). An interaction with SEC13 region spans residues 161 to 471 (PGAKTQPPED…IDASQTEFEK (311 aa)). The WD 8; interaction with SEC13 repeat unit spans residues 397-430 (SFSFGGKLVTFENVRMPSHQGAEQQQQQHHVFIS). A phosphoserine mark is found at serine 527 and serine 532. Lysine 647 is covalently cross-linked (Glycyl lysine isopeptide (Lys-Gly) (interchain with G-Cter in ubiquitin)). Disordered stretches follow at residues 791 to 908 (GEPV…NAYP) and 924 to 1096 (QLYA…GNTF). Serine 799 is modified (phosphoserine). The tract at residues 800-1113 (PKIPYEKQQL…TKKITKKPIP (314 aa)) is interaction with PDCD6. The ALG-2-binding site motif-2 (ABS-2) motif lies at 842–848 (GFIMHGN). The span at 849-859 (VNPNAAGQLPT) shows a compositional bias: polar residues. A compositionally biased stretch (pro residues) spans 869-882 (PPYPQPQPYQPAQP). The span at 962–972 (PSSSAYALPPG) shows a compositional bias: low complexity. Composition is skewed to polar residues over residues 984 to 995 (PASQRTGPQNGW) and 1031 to 1053 (PQSQMLQQQPSAPVPLSSQSSFP). Threonine 1161 carries the post-translational modification Phosphothreonine. A Phosphoserine modification is found at serine 1163. Lysine 1217 is covalently cross-linked (Glycyl lysine isopeptide (Lys-Gly) (interchain with G-Cter in ubiquitin)).

The protein belongs to the WD repeat SEC31 family. As to quaternary structure, COPII is composed of at least 5 proteins: the SEC23/24 complex, the SEC13/31 complex and SAR1. SEC13 and SEC31 make a 2:2 tetramer that forms the edge element of the COPII outer coat. The tetramer self-assembles in multiple copies to form the complete polyhedral cage. Interacts (via WD 8) with SEC13. Interacts with PDCD6; interaction takes place in response to cytosolic calcium increase and leads to bridge together the BCR(KLHL12) complex and SEC31A, leading to monoubiquitination. Interacts with KLHL12. Post-translationally, monoubiquitinated by the BCR(KLHL12) E3 ubiquitin ligase complex, leading to regulate the size of COPII coats. As to expression, abundantly and ubiquitously expressed.

Its subcellular location is the cytoplasm. It is found in the cytoplasmic vesicle. The protein localises to the COPII-coated vesicle membrane. The protein resides in the endoplasmic reticulum membrane. It localises to the cytosol. Functionally, component of the coat protein complex II (COPII) which promotes the formation of transport vesicles from the endoplasmic reticulum (ER). The coat has two main functions, the physical deformation of the endoplasmic reticulum membrane into vesicles and the selection of cargo molecules. This chain is Protein transport protein Sec31A (SEC31A), found in Homo sapiens (Human).